A 414-amino-acid polypeptide reads, in one-letter code: Esterase FrsA (414 aa).

This sequence belongs to the FrsA family.

The catalysed reaction is a carboxylic ester + H2O = an alcohol + a carboxylate + H(+). In terms of biological role, catalyzes the hydrolysis of esters. This Escherichia coli O8 (strain IAI1) protein is Esterase FrsA.